The chain runs to 340 residues: Hydroxyurea phosphotransferase (340 aa).

Catalysis depends on aspartate 240, which acts as the Proton acceptor.

The protein belongs to the aminoglycoside phosphotransferase family.

Functionally, potential phosphotransferase that inactivates hydroxyurea by phosphorylation of the hydroxy group in the hydroxylamine moiety. The sequence is that of Hydroxyurea phosphotransferase (hur) from Kitasatospora aureofaciens (Streptomyces aureofaciens).